The chain runs to 21 residues: TRSSRAGLQFPVGRVHRLLRK.

Lysine 21 bears the N6-(2-hydroxyisobutyryl)lysine; alternate mark.

The protein belongs to the histone H2A family. Expressed by the skin glands.

It localises to the secreted. In terms of biological role, antimicrobial peptide with potent activity against some Gram-positive and Gram-negative bacteria. Does not permeabilize membrane, but internalizes into bacterial cells and alter specific gene expression involved in bacterial resistance mechanisms. Has the ability to agglutinate E.coli, and lipid vesicles. Shows a weak hemolytic activity, and is not cytotoxic to monocytes. In Sphaenorhynchus lacteus (Orinoco lime treefrog), this protein is Buforin-2.